The primary structure comprises 461 residues: Cysteine--tRNA ligase (461 aa).

Cys28 serves as a coordination point for Zn(2+). The 'HIGH' region motif lies at 30 to 40 (MTVYDYCHLGH). Positions 212, 237, and 241 each coordinate Zn(2+). The 'KMSKS' region motif lies at 269–273 (KMSKS). Position 272 (Lys272) interacts with ATP.

It belongs to the class-I aminoacyl-tRNA synthetase family. As to quaternary structure, monomer. Requires Zn(2+) as cofactor.

The protein resides in the cytoplasm. The enzyme catalyses tRNA(Cys) + L-cysteine + ATP = L-cysteinyl-tRNA(Cys) + AMP + diphosphate. This chain is Cysteine--tRNA ligase, found in Aromatoleum aromaticum (strain DSM 19018 / LMG 30748 / EbN1) (Azoarcus sp. (strain EbN1)).